The primary structure comprises 512 residues: MTIVLNPGKVTLSQLEAVYWNGEVSKLHHDTHFAIKKGAERIAKIAAGSEPVYGINTGFGKLASIKIDADNVVVLQRNLILSHCCGVGVPLAENIVRLMMTLKLISLGRGASGVRLELVQLLENMLANGVIPVIPEKGSVGASGDLAPLAHMAAVMMGEGEAFFQNIRMSGIAALEKAGLCPITLEAKEGLALINGTQTSTALALAGLFRGYRALCGGLLAGALTTDALMGSTAPFHPDIHILRGHYGQIVVSETLEKLVKDSGIRAAHLRDDDRVQDPYCIRCQPQVMGACFDLLIAAAKTLIIEANAVTDNPLILSDDTVVSGGNFHAEPVAFAADQIALALCEIGSISQRRIALMVDPAVSYGLPAFLAKNAGLNSGFMIAEVTAAALMSENKQMAHPASVDSTPTSANQEDHVSMACHGARRLLAMSENLFTIIGIETLVAAQGIEYRAPLKTSSLLQSVMEYLRKNIDTLKGDRYLASDLHKAHILVSEGRLLSVLSETIFPQLKPK.

A cross-link (5-imidazolinone (Ala-Gly)) is located at residues 142 to 144; the sequence is ASG. Residue serine 143 is modified to 2,3-didehydroalanine (Ser).

The protein belongs to the PAL/histidase family. Post-translationally, contains an active site 4-methylidene-imidazol-5-one (MIO), which is formed autocatalytically by cyclization and dehydration of residues Ala-Ser-Gly.

It localises to the cytoplasm. It carries out the reaction L-histidine = trans-urocanate + NH4(+). It functions in the pathway amino-acid degradation; L-histidine degradation into L-glutamate; N-formimidoyl-L-glutamate from L-histidine: step 1/3. This Bartonella henselae (strain ATCC 49882 / DSM 28221 / CCUG 30454 / Houston 1) (Rochalimaea henselae) protein is Histidine ammonia-lyase.